A 930-amino-acid chain; its full sequence is Type I restriction enzyme SsaAORF53P endonuclease subunit (930 aa).

The region spanning 254–418 (HQATETSNNG…DGRSTADIFG (165 aa)) is the Helicase ATP-binding domain. 268 to 274 (TTGSGKT) lines the ATP pocket.

It belongs to the HsdR family. The type I restriction/modification system is composed of three polypeptides R, M and S.

The catalysed reaction is Endonucleolytic cleavage of DNA to give random double-stranded fragments with terminal 5'-phosphates, ATP is simultaneously hydrolyzed.. Functionally, the restriction (R) subunit of a type I restriction enzyme that recognizes an undetermined sequence and cleaves a random distance away. Subunit R is required for both nuclease and ATPase activities, but not for modification. After locating a non-methylated recognition site, the enzyme complex serves as a molecular motor that translocates DNA in an ATP-dependent manner until a collision occurs that triggers cleavage. This is Type I restriction enzyme SsaAORF53P endonuclease subunit from Staphylococcus saprophyticus subsp. saprophyticus (strain ATCC 15305 / DSM 20229 / NCIMB 8711 / NCTC 7292 / S-41).